A 475-amino-acid chain; its full sequence is Aspartyl/glutamyl-tRNA(Asn/Gln) amidotransferase subunit B (475 aa).

It belongs to the GatB/GatE family. GatB subfamily. As to quaternary structure, heterotrimer of A, B and C subunits.

The catalysed reaction is L-glutamyl-tRNA(Gln) + L-glutamine + ATP + H2O = L-glutaminyl-tRNA(Gln) + L-glutamate + ADP + phosphate + H(+). The enzyme catalyses L-aspartyl-tRNA(Asn) + L-glutamine + ATP + H2O = L-asparaginyl-tRNA(Asn) + L-glutamate + ADP + phosphate + 2 H(+). Its function is as follows. Allows the formation of correctly charged Asn-tRNA(Asn) or Gln-tRNA(Gln) through the transamidation of misacylated Asp-tRNA(Asn) or Glu-tRNA(Gln) in organisms which lack either or both of asparaginyl-tRNA or glutaminyl-tRNA synthetases. The reaction takes place in the presence of glutamine and ATP through an activated phospho-Asp-tRNA(Asn) or phospho-Glu-tRNA(Gln). This Chromobacterium violaceum (strain ATCC 12472 / DSM 30191 / JCM 1249 / CCUG 213 / NBRC 12614 / NCIMB 9131 / NCTC 9757 / MK) protein is Aspartyl/glutamyl-tRNA(Asn/Gln) amidotransferase subunit B.